A 197-amino-acid chain; its full sequence is UPF0462 protein C4orf33 homolog (197 aa).

This sequence belongs to the UPF0462 family.

The polypeptide is UPF0462 protein C4orf33 homolog (Danio rerio (Zebrafish)).